The sequence spans 479 residues: Zinc metalloproteinase/disintegrin (479 aa).

A signal peptide spans 1–20 (MIQVLLVTICLAAFPYQGSS). Positions 21 to 187 (IILESGKVND…PIKKASQLIV (167 aa)) are excised as a propeptide. Residues 193-390 (RYMEIVIVVD…ENPPCILNKP (198 aa)) form the Peptidase M12B domain. Residues Glu196 and Asp280 each contribute to the Ca(2+) site. 3 cysteine pairs are disulfide-bonded: Cys304/Cys385, Cys344/Cys369, and Cys346/Cys352. Residue His329 coordinates Zn(2+). Residue Glu330 is part of the active site. Zn(2+) contacts are provided by His333 and His339. Ca(2+)-binding residues include Cys385 and Asn388. A propeptide spanning residues 390-414 (PLRTDTVSTPVSGNELLEAGKDYDR) is cleaved from the precursor. A Disintegrin domain is found at 398 to 479 (TPVSGNELLE…ADCPRNPYHA (82 aa)). 3 disulfide bridges follow: Cys435–Cys441, Cys440–Cys465, and Cys453–Cys472. A Cell attachment site motif is present at residues 457–459 (RGD).

Belongs to the venom metalloproteinase (M12B) family. P-II subfamily. P-IIa sub-subfamily. Monomer. Zn(2+) is required as a cofactor. In terms of tissue distribution, expressed by the venom gland.

It localises to the secreted. Its function is as follows. Snake venom metalloproteinase that impairs hemostasis in the envenomed animal. Inhibits platelet aggregation induced by ADP, thrombin, platelet-activating factor and collagen. Acts by inhibiting fibrinogen interaction with platelet receptors GPIIb/GPIIIa (ITGA2B/ITGB3). This chain is Zinc metalloproteinase/disintegrin, found in Deinagkistrodon acutus (Hundred-pace snake).